Here is a 361-residue protein sequence, read N- to C-terminus: Chorismate synthase (361 aa).

The NADP(+) site is built by arginine 48 and arginine 54. FMN-binding positions include 125–127 (RSS), 238–239 (NA), glycine 278, 293–297 (KPTSS), and arginine 319.

This sequence belongs to the chorismate synthase family. As to quaternary structure, homotetramer. The cofactor is FMNH2.

The enzyme catalyses 5-O-(1-carboxyvinyl)-3-phosphoshikimate = chorismate + phosphate. The protein operates within metabolic intermediate biosynthesis; chorismate biosynthesis; chorismate from D-erythrose 4-phosphate and phosphoenolpyruvate: step 7/7. In terms of biological role, catalyzes the anti-1,4-elimination of the C-3 phosphate and the C-6 proR hydrogen from 5-enolpyruvylshikimate-3-phosphate (EPSP) to yield chorismate, which is the branch point compound that serves as the starting substrate for the three terminal pathways of aromatic amino acid biosynthesis. This reaction introduces a second double bond into the aromatic ring system. The sequence is that of Chorismate synthase from Shigella boydii serotype 18 (strain CDC 3083-94 / BS512).